The chain runs to 272 residues: 3-methyl-2-oxobutanoate hydroxymethyltransferase (272 aa).

Mg(2+) contacts are provided by Asp-43 and Asp-82. Residues 43 to 44 (DS), Asp-82, and Lys-112 each bind 3-methyl-2-oxobutanoate. Position 114 (Glu-114) interacts with Mg(2+). Glu-179 (proton acceptor) is an active-site residue.

Belongs to the PanB family. In terms of assembly, homodecamer; pentamer of dimers. Mg(2+) serves as cofactor.

It localises to the cytoplasm. It carries out the reaction 3-methyl-2-oxobutanoate + (6R)-5,10-methylene-5,6,7,8-tetrahydrofolate + H2O = 2-dehydropantoate + (6S)-5,6,7,8-tetrahydrofolate. It functions in the pathway cofactor biosynthesis; (R)-pantothenate biosynthesis; (R)-pantoate from 3-methyl-2-oxobutanoate: step 1/2. Catalyzes the reversible reaction in which hydroxymethyl group from 5,10-methylenetetrahydrofolate is transferred onto alpha-ketoisovalerate to form ketopantoate. The chain is 3-methyl-2-oxobutanoate hydroxymethyltransferase from Staphylococcus aureus (strain bovine RF122 / ET3-1).